A 258-amino-acid chain; its full sequence is NAD kinase (258 aa).

Asp45 acts as the Proton acceptor in catalysis. NAD(+) is bound by residues Asp45–Gly46, Asn117–Glu118, Asp147, Ala155, Thr158–Ser163, and Ala182.

It belongs to the NAD kinase family. It depends on a divalent metal cation as a cofactor.

The protein resides in the cytoplasm. The catalysed reaction is NAD(+) + ATP = ADP + NADP(+) + H(+). Its function is as follows. Involved in the regulation of the intracellular balance of NAD and NADP, and is a key enzyme in the biosynthesis of NADP. Catalyzes specifically the phosphorylation on 2'-hydroxyl of the adenosine moiety of NAD to yield NADP. The protein is NAD kinase of Xanthomonas campestris pv. campestris (strain 8004).